Consider the following 278-residue polypeptide: Small ribosomal subunit protein uS2 (278 aa).

Residues 235–278 (AEAAEEAPKRERKAKAAVKKERTKKEDDDALNANVAGKFAKDEE) are disordered. Basic and acidic residues predominate over residues 252–261 (VKKERTKKED).

The protein belongs to the universal ribosomal protein uS2 family.

The protein is Small ribosomal subunit protein uS2 of Parabacteroides distasonis (strain ATCC 8503 / DSM 20701 / CIP 104284 / JCM 5825 / NCTC 11152).